A 241-amino-acid chain; its full sequence is Carboxy-S-adenosyl-L-methionine synthase (241 aa).

Residues Y38, 63–65 (GCS), 88–89 (DN), 116–117 (DI), N131, and R198 contribute to the S-adenosyl-L-methionine site.

It belongs to the class I-like SAM-binding methyltransferase superfamily. Cx-SAM synthase family. In terms of assembly, homodimer.

The enzyme catalyses prephenate + S-adenosyl-L-methionine = carboxy-S-adenosyl-L-methionine + 3-phenylpyruvate + H2O. Its function is as follows. Catalyzes the conversion of S-adenosyl-L-methionine (SAM) to carboxy-S-adenosyl-L-methionine (Cx-SAM). This Actinobacillus succinogenes (strain ATCC 55618 / DSM 22257 / CCUG 43843 / 130Z) protein is Carboxy-S-adenosyl-L-methionine synthase.